Consider the following 124-residue polypeptide: MSGRGKSGKARTKAKSRSSRAGLQFPVGRVHRFLRKGNYAKRVGGGAPVYMAAVLEYLTAEILELAGNAARDNKKSRIIPRHLQLAVRNDEELNKLLGGVTIAQGGVLPNIQAVLLPKKTGKSS.

Basic residues predominate over residues 1–18 (MSGRGKSGKARTKAKSRS). Residues 1–21 (MSGRGKSGKARTKAKSRSSRA) form a disordered region. Position 2 is an N-acetylserine (Ser2). At Ser2 the chain carries Phosphoserine. Gln104 bears the N5-methylglutamine mark. Lys119 participates in a covalent cross-link: Glycyl lysine isopeptide (Lys-Gly) (interchain with G-Cter in ubiquitin).

This sequence belongs to the histone H2A family. In terms of assembly, the nucleosome is a histone octamer containing two molecules each of H2A, H2B, H3 and H4 assembled in one H3-H4 heterotetramer and two H2A-H2B heterodimers. The octamer wraps approximately 147 bp of DNA. Post-translationally, monoubiquitination of Lys-119 gives a specific tag for epigenetic transcriptional repression. In terms of processing, phosphorylation of Ser-2 directly represses transcription.

It is found in the nucleus. Its subcellular location is the chromosome. In terms of biological role, core component of nucleosome. Nucleosomes wrap and compact DNA into chromatin, limiting DNA accessibility to the cellular machineries which require DNA as a template. Histones thereby play a central role in transcription regulation, DNA repair, DNA replication and chromosomal stability. DNA accessibility is regulated via a complex set of post-translational modifications of histones, also called histone code, and nucleosome remodeling. This Paracentrotus lividus (Common sea urchin) protein is Histone H2A.